Reading from the N-terminus, the 493-residue chain is Lysine--tRNA ligase (493 aa).

Positions 403 and 410 each coordinate Mg(2+).

This sequence belongs to the class-II aminoacyl-tRNA synthetase family. Homodimer. The cofactor is Mg(2+).

The protein localises to the cytoplasm. It carries out the reaction tRNA(Lys) + L-lysine + ATP = L-lysyl-tRNA(Lys) + AMP + diphosphate. This chain is Lysine--tRNA ligase, found in Wigglesworthia glossinidia brevipalpis.